Consider the following 161-residue polypeptide: Pleiotrophin-B (161 aa).

Positions 1 to 23 are cleaved as a signal peptide; it reads MHHQHGLFMLALLAFLLVMTVLG. Intrachain disulfides connect Cys41-Cys70, Cys49-Cys79, Cys56-Cys83, Cys93-Cys125, and Cys103-Cys135. 2 chondroitin sulfate binding regions span residues 86–93 and 117–125; these read KKQFGAEC and KRALHNAEC. The tract at residues 136–161 is disordered; that stretch reads GKVTKPKLQESKKKKKEGKNKEKLLD. The segment at 141 to 161 is chondroitin sulfate A binding; that stretch reads PKLQESKKKKKEGKNKEKLLD.

Belongs to the pleiotrophin family. As to expression, expressed in high levels in brain and eye. Lower levels in bone. In the tailbud embryo stage, it is expressed exclusively in the central nervous system, especially in the hind region of the brain.

It is found in the secreted. Functionally, secreted growth factor that mediates its signal through cell-surface proteoglycan and non-proteoglycan receptors. Binds cell-surface proteoglycan receptor via their chondroitin sulfate (CS) groups. Thereby regulates many processes like cell proliferation, cell survival, cell growth, cell differentiation and cell migration. Has antibacterial activity against both Gram-positive and Gram-negative bacteria. The sequence is that of Pleiotrophin-B (ptn-b) from Xenopus laevis (African clawed frog).